Reading from the N-terminus, the 81-residue chain is Insulin (81 aa).

3 cysteine pairs are disulfide-bonded: C7-C67, C19-C80, and C66-C71. Positions 33–58 (DVEQPLVNGPLHGEVGELPFQHEEYQ) are cleaved as a propeptide — c peptide.

The protein belongs to the insulin family. In terms of assembly, heterodimer of a B chain and an A chain linked by two disulfide bonds.

Its subcellular location is the secreted. In terms of biological role, insulin decreases blood glucose concentration. It increases cell permeability to monosaccharides, amino acids and fatty acids. It accelerates glycolysis, the pentose phosphate cycle, and glycogen synthesis in liver. The polypeptide is Insulin (INS) (Anas platyrhynchos (Mallard)).